We begin with the raw amino-acid sequence, 428 residues long: Putative zinc finger protein 355P (428 aa).

Residues 1-64 (MRDEVAEKEK…KHPGLTQHNI (64 aa)) enclose the KRAB domain. C2H2-type zinc fingers lie at residues 72 to 94 (YKCK…QRIH), 100 to 122 (YKCE…MRAH), and 128 to 150 (YKCE…KRIH). The segment at 156-178 (YKFEECDKAFYWVLSFTKHMIIH) adopts a C2H2-type 4; degenerate zinc-finger fold. The C2H2-type 5; degenerate zinc-finger motif lies at 184-206 (YKYQECGKAFKWSSNLTIHKRIH). A C2H2-type 6; degenerate zinc finger spans residues 212–234 (CKCEECGKACKQSLGLTIQKRIH). Residues 263–285 (YNCEKCGKAFYCSSNLIQNNIVH) form a C2H2-type 7; degenerate zinc finger. 2 consecutive C2H2-type zinc fingers follow at residues 291–313 (YKCQ…KIIH) and 335–357 (YKCE…MIVH). Residues 363–385 (YKCEECGKAFKWSSELTIHQRIR) form a C2H2-type 10; degenerate zinc finger. The C2H2-type 11 zinc finger occupies 391–413 (YKCEECVRVFKHSSKLNEHKRNH).

The protein belongs to the krueppel C2H2-type zinc-finger protein family.

It localises to the nucleus. Its function is as follows. May be involved in transcriptional regulation. This Homo sapiens (Human) protein is Putative zinc finger protein 355P (ZNF355P).